The chain runs to 214 residues: 3-demethoxyubiquinol 3-hydroxylase (214 aa).

Positions 63, 93, 96, 145, 177, and 180 each coordinate Fe cation.

This sequence belongs to the COQ7 family. It depends on Fe cation as a cofactor.

It localises to the cell membrane. It catalyses the reaction a 5-methoxy-2-methyl-3-(all-trans-polyprenyl)benzene-1,4-diol + AH2 + O2 = a 3-demethylubiquinol + A + H2O. Its pathway is cofactor biosynthesis; ubiquinone biosynthesis. Its function is as follows. Catalyzes the hydroxylation of 2-nonaprenyl-3-methyl-6-methoxy-1,4-benzoquinol during ubiquinone biosynthesis. In Nitrosococcus oceani (strain ATCC 19707 / BCRC 17464 / JCM 30415 / NCIMB 11848 / C-107), this protein is 3-demethoxyubiquinol 3-hydroxylase.